Reading from the N-terminus, the 435-residue chain is GTPase Obg (435 aa).

The region spanning 1-159 is the Obg domain; the sequence is MAFIDKCKIV…VEVLLELKTI (159 aa). Residues 160–329 enclose the OBG-type G domain; sequence ADIGIIGLPN…MLDDVIKIYF (170 aa). GTP contacts are provided by residues 166–173, 191–195, 212–215, 282–285, and 310–312; these read GLPNAGKS, FTTLN, DIPG, NKID, and SAL. Residues serine 173 and threonine 193 each coordinate Mg(2+). The region spanning 357–435 is the OCT domain; that stretch reads KSKELDKTIE…IYDITLEFEE (79 aa).

The protein belongs to the TRAFAC class OBG-HflX-like GTPase superfamily. OBG GTPase family. As to quaternary structure, monomer. Requires Mg(2+) as cofactor.

It localises to the cytoplasm. Functionally, an essential GTPase which binds GTP, GDP and possibly (p)ppGpp with moderate affinity, with high nucleotide exchange rates and a fairly low GTP hydrolysis rate. Plays a role in control of the cell cycle, stress response, ribosome biogenesis and in those bacteria that undergo differentiation, in morphogenesis control. The chain is GTPase Obg from Ureaplasma parvum serovar 3 (strain ATCC 27815 / 27 / NCTC 11736).